Reading from the N-terminus, the 82-residue chain is MAKILLTFIILTCLIVTITPAVYDYACYKKGCSKIQGRCSTNADCCDGYQCHPQTASWQVVQKNGCYPINPVPCSQLQQKNV.

A signal peptide spans 1–21 (MAKILLTFIILTCLIVTITPA).

Post-translationally, contains 4 disulfide bonds. In terms of tissue distribution, abundantly expressed by teratocytes, which are extra-embryonic cells released by parasitoid wasps into their hosts during larval eclosion.

It is found in the secreted. This endoparasitoid wasp peptide has immununosuppressive and insecticidal activities. Suppress cellular immunity which is detectable as a reduction of hemocyte spread index in the host. In vivo, ingestion of this peptide moderately reduces leaf consumption of D.saccharalis, a permissive host for the lepidoptere C.flavipes. In Cotesia flavipes (Parasitic wasp), this protein is Teratocyte protein CftICK-IV.